The primary structure comprises 315 residues: Olfactory receptor 4K3 (315 aa).

Residues methionine 1 to isoleucine 25 are Extracellular-facing. Asparagine 5 carries an N-linked (GlcNAc...) asparagine glycan. Residues phenylalanine 26–isoleucine 49 form a helical membrane-spanning segment. At alanine 50–serine 57 the chain is on the cytoplasmic side. A helical transmembrane segment spans residues proline 58 to proline 79. The Extracellular segment spans residues lysine 80–glutamine 100. A disulfide bridge connects residues cysteine 97 and cysteine 189. The chain crosses the membrane as a helical span at residues methionine 101–phenylalanine 120. Topologically, residues aspartate 121 to arginine 139 are cytoplasmic. Residues methionine 140–serine 158 form a helical membrane-spanning segment. Residues glutamine 159–leucine 195 lie on the Extracellular side of the membrane. A helical membrane pass occupies residues glycine 196–threonine 219. At isoleucine 220–lysine 235 the chain is on the cytoplasmic side. A helical membrane pass occupies residues alanine 236–tyrosine 258. Residues valine 259 to lysine 269 are Extracellular-facing. A helical membrane pass occupies residues valine 270–valine 289. The Cytoplasmic portion of the chain corresponds to arginine 290–proline 315.

Belongs to the G-protein coupled receptor 1 family.

The protein resides in the cell membrane. Its function is as follows. Odorant receptor. This chain is Olfactory receptor 4K3 (OR4K3), found in Homo sapiens (Human).